A 341-amino-acid polypeptide reads, in one-letter code: MKALSKLKPEEGIWMVDAPKPEVGHNDLLIKIRKTAICGTDVHIYNWDEWSQNTIPVPMVVGHEYVGEVVGMGQEVRGFTIGDRVSGEGHITCGHCRNCRGGRTHLCRNTSGVGVNREGAFAEYLVIPAFNAFKIPDDISDDLASIFDPFGNAVHTALSFDLVGEDVLITGAGPIGIMAAAVCRHVGARHVVITDVNEYRLELAEKMGATRAVNVAKENLEDVMQELGMTEGFDVGLEMSGVPSAFHSMLDTMNHGGKIAMLGIPGGDMAIDWSKVIFKGLIIKGIYGREMFETWYKMASLIQSGLDISPIITHHYSIDEFQQGFDAMRSGQSGKVILNWD.

Cys38 provides a ligand contact to Zn(2+). Residues Thr40 and His43 each act as charge relay system in the active site. Residues His63, Glu64, Cys93, Cys96, Cys99, and Cys107 each coordinate Zn(2+). NAD(+) contacts are provided by residues Ile175, Asp195, Arg200, 262–264 (LGI), and 286–287 (IY).

Belongs to the zinc-containing alcohol dehydrogenase family. As to quaternary structure, homotetramer. Zn(2+) serves as cofactor.

It localises to the cytoplasm. It carries out the reaction L-threonine + NAD(+) = (2S)-2-amino-3-oxobutanoate + NADH + H(+). It participates in amino-acid degradation; L-threonine degradation via oxydo-reductase pathway; glycine from L-threonine: step 1/2. Catalyzes the NAD(+)-dependent oxidation of L-threonine to 2-amino-3-ketobutyrate. The protein is L-threonine 3-dehydrogenase of Shewanella pealeana (strain ATCC 700345 / ANG-SQ1).